Consider the following 489-residue polypeptide: Lysine-specific permease LysP (489 aa).

The Cytoplasmic segment spans residues 2–22 (VSETKTTEAPGLRRELKARHL). Residues 23-43 (TMIAIGGSIGTGLFVASGATI) form a helical membrane-spanning segment. Over 44 to 45 (SQ) the chain is Periplasmic. The chain crosses the membrane as a helical span at residues 46–66 (AGPGGALLSYMLIGLMVYFLM). Topologically, residues 67–105 (TSLGELAAYMPVSGSFATYGQNYVEEGFGFALGWNYWYN) are cytoplasmic. The helical transmembrane segment at 106–126 (WAVTIAVDLVAAQLVMSWWFP) threads the bilayer. The Periplasmic portion of the chain corresponds to 127-128 (DT). Residues 129-149 (PGWIWSALFLGVIFLLNYISV) traverse the membrane as a helical segment. The Cytoplasmic segment spans residues 150–161 (RGFGEAEYWFSL). A helical membrane pass occupies residues 162-182 (IKVTTVIVFIIVGVLMIIGIF). The Periplasmic portion of the chain corresponds to 183–197 (KGAQPAGWSNWTIGE). A helical membrane pass occupies residues 198-218 (APFAGGFAAMIGVAMIVGFSF). Over 219-244 (QGTELIGIAAGESEDPAKNIPRAVRQ) the chain is Cytoplasmic. A helical membrane pass occupies residues 245 to 265 (VFWRILLFYVFAILIISLIIP). The Periplasmic portion of the chain corresponds to 266 to 290 (YTDPSLLRNDVKDISVSPFTLVFQH). The chain crosses the membrane as a helical span at residues 291 to 311 (AGLLSAAAVMNAVILTAVLSA). The Cytoplasmic segment spans residues 312–346 (GNSGMYASTRMLYTLACDGKAPRIFAKLSRGGVPR). A helical transmembrane segment spans residues 347 to 367 (NALYATTVIAGLCFLTSMFGN). Over 368-370 (QTV) the chain is Periplasmic. The helical transmembrane segment at 371–391 (YLWLLNTSGMTGFIAWLGIAI) threads the bilayer. Residues 392-413 (SHYRFRRGYVLQGHDINDLPYR) are Cytoplasmic-facing. Residues 414-434 (SGFFPLGPIFAFILCLIITLG) form a helical membrane-spanning segment. Topologically, residues 435-446 (QNYEAFLKDTID) are periplasmic. The helical transmembrane segment at 447–467 (WGGVAATYIGIPLFLIIWFGY) threads the bilayer. Residues 468–489 (KLIKGTHFVRYSEMKFPQNDKK) are Cytoplasmic-facing.

Belongs to the amino acid-polyamine-organocation (APC) superfamily. Amino acid transporter (AAT) (TC 2.A.3.1) family. In terms of assembly, interacts strongly with the transcriptional activator CadC in the absence of lysine or at low lysine concentrations. Interaction is markedly attenuated under increasing lysine levels. Concomitant pH-dependent protonation of periplasmic amino acids in both proteins dissolves their electrostatic connections resulting in further destabilization of the CadC/LysP interaction. Low pH promotes oligomerization of LysP.

It is found in the cell inner membrane. It carries out the reaction L-lysine(out) + H(+)(out) = L-lysine(in) + H(+)(in). Permease involved in lysine uptake. In addition, functions as a lysine sensor that mediates the lysine-dependent regulation of the transcriptional activator CadC. In the absence of lysine, or at low lysine concentrations, LysP inhibits CadC by an interaction with the transmembrane domain of CadC. In the presence of lysine, LysP loses its ability to interact with and inhibit CadC, and acts as a lysine permease. The chain is Lysine-specific permease LysP from Escherichia coli (strain K12).